A 374-amino-acid chain; its full sequence is MEMVNAEAKQSVPLLTPYKMGRFNLSHRVVLAPLTRQKSYGSVPQPHAILYYSQRTSPGGFLIAEATGVSDTAQGYPDTPGIWTKEHVEAWKPIVDAVHAKGGIFFCQIWHVGRVSNRGFQPRRQAPISCTGKPIMPQMRANGIDEARFTPPRRLSIEEIPGIVNDFRLAARNAMEAGFDGVEIHGAHGYLIDQFMKDKVNDRTDEYGGSLQNRCKFALEVVDAVAKEIGPDRVGIRLSPFADYMESGDTNPEALGLYMVESLNKYGILYCHMIEPRMKTVGEIAACSHTLMPMREAFKGTFISAGGFTREDGNEAVAKGRTDLVAYGRWFLANPDLPKRFQLDAPLNKYNRSTFYTSDPVVGYTDYPSLESTA.

At Met-1 the chain carries N-acetylmethionine. FMN-binding positions include 33 to 35 (PLT), Ala-66, and Gln-108. His-185 serves as a coordination point for substrate. The active-site Proton donor is Tyr-190. Arg-237 is an FMN binding site. Arg-277 contacts substrate. FMN is bound by residues 305 to 307 (AGG) and 328 to 329 (GR).

The protein belongs to the NADH:flavin oxidoreductase/NADH oxidase family. It depends on FMN as a cofactor. Expressed at highest levels in roots and cotyledons, and at lower levels in leaves, shoots and flowers (sepals, petals, maturing siliques and developing pollen).

It localises to the cytoplasm. The catalysed reaction is (1S,2S)-OPC-8 + NADP(+) = (9S,13S,15Z)-12-oxophyto-10,15-dienoate + NADPH + H(+). It carries out the reaction a 4,5-didehydrojasmonate + NADPH + H(+) = a jasmonate + NADP(+). The protein operates within lipid metabolism; oxylipin biosynthesis. Functionally, specifically cleaves olefinic bonds in alpha,beta-unsaturated carbonyls and may be involved in detoxification or modification of these reactive compounds. May be involved in the biosynthesis or metabolism of oxylipin signaling molecules. In vitro, reduces 9R,13R-12-oxophytodienoic acid (9R,13R-OPDA) to 9R,13R-OPC-8:0, but only poorly 9S,13S-OPDA, the natural precursor of jasmonic acid (JA). Can detoxify the explosive 2,4,6-trinitrotoluene (TNT) in vitro and in vivo by catalyzing its nitroreduction to form hydroxylamino-dinitrotoluene (HADNT). Functions in an alternative and OPR3-independent pathway for JA biosynthesis. Catalyzes the NADPH-dependent reduction of 4,5-didehydrojasmonates to jasmonates. The sequence is that of 12-oxophytodienoate reductase 2 from Arabidopsis thaliana (Mouse-ear cress).